Consider the following 502-residue polypeptide: ATP synthase subunit alpha (502 aa).

169 to 176 is a binding site for ATP; the sequence is GDRATGKT.

Belongs to the ATPase alpha/beta chains family. In terms of assembly, F-type ATPases have 2 components, CF(1) - the catalytic core - and CF(0) - the membrane proton channel. CF(1) has five subunits: alpha(3), beta(3), gamma(1), delta(1), epsilon(1). CF(0) has three main subunits: a(1), b(2) and c(9-12). The alpha and beta chains form an alternating ring which encloses part of the gamma chain. CF(1) is attached to CF(0) by a central stalk formed by the gamma and epsilon chains, while a peripheral stalk is formed by the delta and b chains.

It localises to the cell inner membrane. It carries out the reaction ATP + H2O + 4 H(+)(in) = ADP + phosphate + 5 H(+)(out). Functionally, produces ATP from ADP in the presence of a proton gradient across the membrane. The alpha chain is a regulatory subunit. This is ATP synthase subunit alpha from Hydrogenobaculum sp. (strain Y04AAS1).